Consider the following 492-residue polypeptide: N-succinylglutamate 5-semialdehyde dehydrogenase (492 aa).

Residue 220 to 225 (GSANTG) participates in NAD(+) binding. Catalysis depends on residues Glu-243 and Cys-277.

This sequence belongs to the aldehyde dehydrogenase family. AstD subfamily.

The catalysed reaction is N-succinyl-L-glutamate 5-semialdehyde + NAD(+) + H2O = N-succinyl-L-glutamate + NADH + 2 H(+). It participates in amino-acid degradation; L-arginine degradation via AST pathway; L-glutamate and succinate from L-arginine: step 4/5. Functionally, catalyzes the NAD-dependent reduction of succinylglutamate semialdehyde into succinylglutamate. The protein is N-succinylglutamate 5-semialdehyde dehydrogenase of Escherichia coli O17:K52:H18 (strain UMN026 / ExPEC).